A 293-amino-acid chain; its full sequence is Homoserine kinase (293 aa).

Residue 83 to 93 (RPKSGLGSSGA) coordinates ATP.

Belongs to the GHMP kinase family. Homoserine kinase subfamily.

The protein localises to the cytoplasm. The enzyme catalyses L-homoserine + ATP = O-phospho-L-homoserine + ADP + H(+). It functions in the pathway amino-acid biosynthesis; L-threonine biosynthesis; L-threonine from L-aspartate: step 4/5. Its function is as follows. Catalyzes the ATP-dependent phosphorylation of L-homoserine to L-homoserine phosphate. The chain is Homoserine kinase from Pyrococcus horikoshii (strain ATCC 700860 / DSM 12428 / JCM 9974 / NBRC 100139 / OT-3).